A 239-amino-acid chain; its full sequence is 1-(5-phosphoribosyl)-5-[(5-phosphoribosylamino)methylideneamino] imidazole-4-carboxamide isomerase (239 aa).

The active-site Proton acceptor is the Asp-8. Asp-129 (proton donor) is an active-site residue.

Belongs to the HisA/HisF family.

Its subcellular location is the cytoplasm. It carries out the reaction 1-(5-phospho-beta-D-ribosyl)-5-[(5-phospho-beta-D-ribosylamino)methylideneamino]imidazole-4-carboxamide = 5-[(5-phospho-1-deoxy-D-ribulos-1-ylimino)methylamino]-1-(5-phospho-beta-D-ribosyl)imidazole-4-carboxamide. It participates in amino-acid biosynthesis; L-histidine biosynthesis; L-histidine from 5-phospho-alpha-D-ribose 1-diphosphate: step 4/9. In Bacillus cytotoxicus (strain DSM 22905 / CIP 110041 / 391-98 / NVH 391-98), this protein is 1-(5-phosphoribosyl)-5-[(5-phosphoribosylamino)methylideneamino] imidazole-4-carboxamide isomerase.